The primary structure comprises 154 residues: Superoxide dismutase [Cu-Zn] (154 aa).

Cu cation-binding residues include histidine 47, histidine 49, and histidine 64. Cysteine 58 and cysteine 147 are joined by a disulfide. The Zn(2+) site is built by histidine 64, histidine 72, histidine 81, and aspartate 84. Histidine 121 is a binding site for Cu cation. Residue arginine 144 participates in substrate binding.

Belongs to the Cu-Zn superoxide dismutase family. In terms of assembly, homodimer. It depends on Cu cation as a cofactor. Zn(2+) serves as cofactor.

Its subcellular location is the cytoplasm. It catalyses the reaction 2 superoxide + 2 H(+) = H2O2 + O2. In terms of biological role, destroys radicals which are normally produced within the cells and which are toxic to biological systems. The chain is Superoxide dismutase [Cu-Zn] (SOD1) from Claviceps purpurea (strain 20.1) (Ergot fungus).